We begin with the raw amino-acid sequence, 88 residues long: Putative septation protein SpoVG (88 aa).

This sequence belongs to the SpoVG family.

Its function is as follows. Could be involved in septation. This chain is Putative septation protein SpoVG, found in Desulforudis audaxviator (strain MP104C).